The following is a 347-amino-acid chain: S-adenosylmethionine:tRNA ribosyltransferase-isomerase (347 aa).

It belongs to the QueA family. Monomer.

The protein localises to the cytoplasm. It catalyses the reaction 7-aminomethyl-7-carbaguanosine(34) in tRNA + S-adenosyl-L-methionine = epoxyqueuosine(34) in tRNA + adenine + L-methionine + 2 H(+). Its pathway is tRNA modification; tRNA-queuosine biosynthesis. Functionally, transfers and isomerizes the ribose moiety from AdoMet to the 7-aminomethyl group of 7-deazaguanine (preQ1-tRNA) to give epoxyqueuosine (oQ-tRNA). In Methylococcus capsulatus (strain ATCC 33009 / NCIMB 11132 / Bath), this protein is S-adenosylmethionine:tRNA ribosyltransferase-isomerase.